The sequence spans 228 residues: Cytidylate kinase (228 aa).

17 to 25 provides a ligand contact to ATP; sequence GPSASGKGT.

It belongs to the cytidylate kinase family. Type 1 subfamily.

The protein localises to the cytoplasm. The enzyme catalyses CMP + ATP = CDP + ADP. The catalysed reaction is dCMP + ATP = dCDP + ADP. The polypeptide is Cytidylate kinase (Paraburkholderia xenovorans (strain LB400)).